Here is an 85-residue protein sequence, read N- to C-terminus: Small ribosomal subunit protein bS20 (85 aa).

Residues 1–22 (MPQIKSAIKRVKTQNATNKRNA) form a disordered region. Polar residues predominate over residues 13-22 (TQNATNKRNA).

The protein belongs to the bacterial ribosomal protein bS20 family.

Binds directly to 16S ribosomal RNA. The chain is Small ribosomal subunit protein bS20 from Lactobacillus acidophilus (strain ATCC 700396 / NCK56 / N2 / NCFM).